The primary structure comprises 145 residues: Aminoglycoside N(6')-acetyltransferase type 1 (145 aa).

The 145-residue stretch at 1–145 (MDIRQMNRTH…ERVIFYRKRC (145 aa)) folds into the N-acetyltransferase domain. Substrate-binding residues include Trp22, His25, Tyr66, and Glu79. Acetyl-CoA contacts are provided by residues 81–83 (IFV) and 89–94 (QRGVAK). Asp115 serves as a coordination point for substrate. Acetyl-CoA is bound at residue Asn120. Residue Glu136 coordinates substrate.

As to quaternary structure, homodimer.

It catalyses the reaction kanamycin B + acetyl-CoA = N(6')-acetylkanamycin B + CoA + H(+). In terms of biological role, catalyzes the transfer of an acetyl group from acetyl-CoA to the 6'-amino group of aminoglycoside molecules conferring resistance to antibiotics containing the purpurosamine ring. The sequence is that of Aminoglycoside N(6')-acetyltransferase type 1 from Salmonella typhimurium (strain LT2 / SGSC1412 / ATCC 700720).